Reading from the N-terminus, the 45-residue chain is Peroxidase 3 (45 aa).

The protein belongs to the peroxidase family. Classical plant (class III) peroxidase subfamily. Heme b is required as a cofactor. The cofactor is Ca(2+).

Its subcellular location is the secreted. The enzyme catalyses 2 a phenolic donor + H2O2 = 2 a phenolic radical donor + 2 H2O. Its function is as follows. Removal of H(2)O(2), oxidation of toxic reductants, biosynthesis and degradation of lignin, suberization, auxin catabolism, response to environmental stresses such as wounding, pathogen attack and oxidative stress. These functions might be dependent on each isozyme/isoform in each plant tissue. This chain is Peroxidase 3, found in Capsicum annuum (Capsicum pepper).